The chain runs to 377 residues: Actin-related protein T2 (377 aa).

The protein belongs to the actin family.

The protein resides in the cytoplasm. It localises to the cytoskeleton. This chain is Actin-related protein T2 (ACTRT2), found in Macaca fascicularis (Crab-eating macaque).